Here is a 145-residue protein sequence, read N- to C-terminus: Hemoglobin subunit beta-3 (145 aa).

The region spanning 1 to 145 is the Globin domain; that stretch reads MLTAEEKAAV…VANALAHRYH (145 aa). Phosphothreonine is present on threonine 11. Lysine 58 is subject to N6-acetyllysine. Histidine 62 provides a ligand contact to heme b. Lysine 81 carries the post-translational modification N6-acetyllysine. Histidine 91 is a heme b binding site. Residue cysteine 92 is modified to S-nitrosocysteine.

Belongs to the globin family. In terms of assembly, heterotetramer of two alpha chains and two beta chains. Red blood cells.

Functionally, involved in oxygen transport from the lung to the various peripheral tissues. This is Hemoglobin subunit beta-3 (HBB) from Odocoileus virginianus virginianus (Virginia white-tailed deer).